The chain runs to 520 residues: GMP synthase [glutamine-hydrolyzing] (520 aa).

One can recognise a Glutamine amidotransferase type-1 domain in the interval 13-205; sequence KIIVLDYGSQ…ALNICKAKGD (193 aa). The active-site Nucleophile is the Cys-90. Catalysis depends on residues His-179 and Glu-181. The region spanning 206 to 395 is the GMPS ATP-PPase domain; sequence WSMDNFIDMQ…LGMPDHIVWR (190 aa). Residue 233–239 participates in ATP binding; sequence SGGVDSS.

Homodimer.

The enzyme catalyses XMP + L-glutamine + ATP + H2O = GMP + L-glutamate + AMP + diphosphate + 2 H(+). It functions in the pathway purine metabolism; GMP biosynthesis; GMP from XMP (L-Gln route): step 1/1. In terms of biological role, catalyzes the synthesis of GMP from XMP. In Streptococcus pneumoniae (strain CGSP14), this protein is GMP synthase [glutamine-hydrolyzing].